The sequence spans 461 residues: Porin AaxA (461 aa).

The signal sequence occupies residues 1 to 22 (MSFRSVLLTALLSLSFTTTMQA).

It belongs to the OprB family.

The protein resides in the cell outer membrane. Facilitates L-arginine uptake, as part of the AaxABC system. The arginine uptake by the bacterium in the macrophage may be a virulence factor against the host innate immune response. This is Porin AaxA (aaxA) from Chlamydia trachomatis serovar D (strain ATCC VR-885 / DSM 19411 / UW-3/Cx).